The following is a 542-amino-acid chain: CTP synthase (542 aa).

Residues 1-265 (MTRYIFVTGG…DEIIVERFGL (265 aa)) are amidoligase domain. Serine 13 lines the CTP pocket. Residue serine 13 coordinates UTP. ATP-binding positions include 14–19 (SLGKGI) and aspartate 71. Aspartate 71 and glutamate 139 together coordinate Mg(2+). CTP is bound by residues 146 to 148 (DIE), 186 to 191 (KTKPTQ), and lysine 222. UTP is bound by residues 186–191 (KTKPTQ) and lysine 222. A Glutamine amidotransferase type-1 domain is found at 290-541 (TIAMVGKYME…VRAALENAGG (252 aa)). Glycine 351 contacts L-glutamine. The active-site Nucleophile; for glutamine hydrolysis is the cysteine 378. L-glutamine is bound by residues 379-382 (LGLQ), glutamate 402, and arginine 469. Catalysis depends on residues histidine 514 and glutamate 516.

The protein belongs to the CTP synthase family. Homotetramer.

The enzyme catalyses UTP + L-glutamine + ATP + H2O = CTP + L-glutamate + ADP + phosphate + 2 H(+). It carries out the reaction L-glutamine + H2O = L-glutamate + NH4(+). The catalysed reaction is UTP + NH4(+) + ATP = CTP + ADP + phosphate + 2 H(+). It functions in the pathway pyrimidine metabolism; CTP biosynthesis via de novo pathway; CTP from UDP: step 2/2. Its activity is regulated as follows. Allosterically activated by GTP, when glutamine is the substrate; GTP has no effect on the reaction when ammonia is the substrate. The allosteric effector GTP functions by stabilizing the protein conformation that binds the tetrahedral intermediate(s) formed during glutamine hydrolysis. Inhibited by the product CTP, via allosteric rather than competitive inhibition. In terms of biological role, catalyzes the ATP-dependent amination of UTP to CTP with either L-glutamine or ammonia as the source of nitrogen. Regulates intracellular CTP levels through interactions with the four ribonucleotide triphosphates. The chain is CTP synthase from Hahella chejuensis (strain KCTC 2396).